The primary structure comprises 341 residues: Elongation factor Ts (341 aa).

The tract at residues 80–83 (TDFV) is involved in Mg(2+) ion dislocation from EF-Tu.

The protein belongs to the EF-Ts family.

It is found in the cytoplasm. Its function is as follows. Associates with the EF-Tu.GDP complex and induces the exchange of GDP to GTP. It remains bound to the aminoacyl-tRNA.EF-Tu.GTP complex up to the GTP hydrolysis stage on the ribosome. This is Elongation factor Ts from Lactobacillus acidophilus (strain ATCC 700396 / NCK56 / N2 / NCFM).